The chain runs to 389 residues: Pyruvate dehydrogenase E1 component subunit alpha, somatic form, mitochondrial (389 aa).

Residues 1–28 (GKMLAAVSRVLSGVAQKPASRVLVASRT) constitute a mitochondrion transit peptide. Lysine 62 carries the N6-acetyllysine; alternate modification. Position 62 is an N6-succinyllysine; alternate (lysine 62). The pyruvate site is built by histidine 91, tyrosine 117, arginine 118, alanine 156, glycine 164, valine 166, aspartate 195, glycine 196, alanine 197, asparagine 224, and tyrosine 226. Residues tyrosine 117 and arginine 118 each coordinate thiamine diphosphate. 6 residues coordinate thiamine diphosphate: glycine 164, valine 166, aspartate 195, glycine 196, alanine 197, and asparagine 224. A Mg(2+)-binding site is contributed by aspartate 195. Mg(2+)-binding residues include asparagine 224 and tyrosine 226. Residue serine 231 is modified to Phosphoserine; by PDK1. An N6-acetyllysine; alternate modification is found at lysine 243. Residue lysine 243 is modified to N6-succinyllysine; alternate. Position 276 is an N6-succinyllysine (lysine 276). Histidine 291 is a binding site for thiamine diphosphate. A Phosphoserine; by PDK1, PDK2, PDK3 and PDK4 modification is found at serine 292. Serine 294 is modified (phosphoserine). The residue at position 299 (serine 299) is a Phosphoserine; by PDK1, PDK2, PDK3 and PDK4. Tyrosine 300 is modified (phosphotyrosine). Residue lysine 312 is modified to N6-acetyllysine; alternate. Lysine 312 is subject to N6-succinyllysine; alternate. N6-acetyllysine is present on residues lysine 320 and lysine 335. N6-succinyllysine is present on lysine 384.

In terms of assembly, heterotetramer of two PDHA1 and two PDHB subunits. The heterotetramer interacts with DLAT, and is part of the multimeric pyruvate dehydrogenase complex that contains multiple copies of pyruvate dehydrogenase (E1), dihydrolipoamide acetyltransferase (DLAT, E2) and lipoamide dehydrogenase (DLD, E3). These subunits are bound to an inner core composed of about 48 DLAT and 12 PDHX molecules. Thiamine diphosphate is required as a cofactor. Mg(2+) serves as cofactor. Phosphorylation at Ser-231, Ser-292 and Ser-299 by PDK family kinases inactivates the enzyme; for this phosphorylation at a single site is sufficient. Phosphorylation at Ser-292 interferes with access to active site, and thereby inactivates the enzyme. Dephosphorylation at all three sites, i.e. at Ser-231, Ser-292 and Ser-299, is required for reactivation. In terms of processing, acetylation alters the phosphorylation pattern. Deacetylated by SIRT3.

The protein resides in the mitochondrion matrix. It carries out the reaction N(6)-[(R)-lipoyl]-L-lysyl-[protein] + pyruvate + H(+) = N(6)-[(R)-S(8)-acetyldihydrolipoyl]-L-lysyl-[protein] + CO2. Its activity is regulated as follows. Pyruvate dehydrogenase activity is inhibited by phosphorylation of PDHA1; it is reactivated by dephosphorylation. Its function is as follows. The pyruvate dehydrogenase complex catalyzes the overall conversion of pyruvate to acetyl-CoA and CO(2), and thereby links the glycolytic pathway to the tricarboxylic cycle. The chain is Pyruvate dehydrogenase E1 component subunit alpha, somatic form, mitochondrial (PDHA1) from Sus scrofa (Pig).